Here is a 245-residue protein sequence, read N- to C-terminus: 1-(5-phosphoribosyl)-5-[(5-phosphoribosylamino)methylideneamino] imidazole-4-carboxamide isomerase (245 aa).

Asp8 serves as the catalytic Proton acceptor. Residue Asp129 is the Proton donor of the active site.

Belongs to the HisA/HisF family.

The protein resides in the cytoplasm. It catalyses the reaction 1-(5-phospho-beta-D-ribosyl)-5-[(5-phospho-beta-D-ribosylamino)methylideneamino]imidazole-4-carboxamide = 5-[(5-phospho-1-deoxy-D-ribulos-1-ylimino)methylamino]-1-(5-phospho-beta-D-ribosyl)imidazole-4-carboxamide. Its pathway is amino-acid biosynthesis; L-histidine biosynthesis; L-histidine from 5-phospho-alpha-D-ribose 1-diphosphate: step 4/9. The polypeptide is 1-(5-phosphoribosyl)-5-[(5-phosphoribosylamino)methylideneamino] imidazole-4-carboxamide isomerase (Sinorhizobium fredii (strain NBRC 101917 / NGR234)).